Consider the following 148-residue polypeptide: Protein Smg homolog (148 aa).

It belongs to the Smg family.

The sequence is that of Protein Smg homolog from Thiobacillus denitrificans (strain ATCC 25259 / T1).